A 338-amino-acid chain; its full sequence is tRNA N6-adenosine threonylcarbamoyltransferase (338 aa).

Positions 110, 114, and 131 each coordinate Fe cation. Substrate is bound by residues 131 to 135 (YVSGG), Asp-163, Asp-184, and Asn-268. Asp-296 is a Fe cation binding site.

This sequence belongs to the KAE1 / TsaD family. Requires Fe(2+) as cofactor.

The protein localises to the cytoplasm. It carries out the reaction L-threonylcarbamoyladenylate + adenosine(37) in tRNA = N(6)-L-threonylcarbamoyladenosine(37) in tRNA + AMP + H(+). Required for the formation of a threonylcarbamoyl group on adenosine at position 37 (t(6)A37) in tRNAs that read codons beginning with adenine. Is probably involved in the transfer of the threonylcarbamoyl moiety of threonylcarbamoyl-AMP (TC-AMP) to the N6 group of A37. The chain is tRNA N6-adenosine threonylcarbamoyltransferase from Staphylothermus marinus (strain ATCC 43588 / DSM 3639 / JCM 9404 / F1).